We begin with the raw amino-acid sequence, 233 residues long: Charged multivesicular body protein 4c (233 aa).

Disordered regions lie at residues 1-24 (MSKL…SPQE) and 173-233 (QEEL…AWAT). Positions 1-153 (MSKLGKFFKG…EISEAFSQRV (153 aa)) are intramolecular interaction with C-terminus. Residues 125 to 183 (LNKIDDLMQEITEQQDIAQEISEAFSQRVGFGDDFDEDELMAELEELEQEELNKKMTNI) are a coiled coil. The segment at 154 to 233 (GFGDDFDEDE…DIKQLAAWAT (80 aa)) is intramolecular interaction with N-terminus. Low complexity predominate over residues 204–216 (SSTARRSRAASSQ). Ser210 is subject to Phosphoserine; by AURKB.

Belongs to the SNF7 family. As to quaternary structure, probable core component of the endosomal sorting required for transport complex III (ESCRT-III). ESCRT-III components are thought to multimerize to form a flat lattice on the perimeter membrane of the endosome. Several assembly forms of ESCRT-III may exist that interact and act sequentially. Self-associates. Interacts with CHMP2A. Interacts with CHMP4A. Interacts with CHMP4B. Interacts with CHMP6. Interacts with VPS4A. Interacts with PDCD6IP; the interaction is direct. In terms of processing, phosphorylated at Ser-210 by AURKB during cytokinesis: together with ZFYVE19/ANCHR, phosphorylated CHMP4C retains abscission-competent VPS4 (VPS4A and/or VPS4B) at the midbody ring until abscission checkpoint signaling is terminated at late cytokinesis. Expressed in heart, spleen and kidney.

The protein localises to the cytoplasm. The protein resides in the cytosol. It localises to the late endosome membrane. It is found in the midbody. Its subcellular location is the midbody ring. Probable core component of the endosomal sorting required for transport complex III (ESCRT-III) which is involved in multivesicular bodies (MVBs) formation and sorting of endosomal cargo proteins into MVBs. MVBs contain intraluminal vesicles (ILVs) that are generated by invagination and scission from the limiting membrane of the endosome and mostly are delivered to lysosomes enabling degradation of membrane proteins, such as stimulated growth factor receptors, lysosomal enzymes and lipids. The MVB pathway appears to require the sequential function of ESCRT-O, -I,-II and -III complexes. ESCRT-III proteins mostly dissociate from the invaginating membrane before the ILV is released. The ESCRT machinery also functions in topologically equivalent membrane fission events, such as the terminal stages of cytokinesis and the budding of enveloped viruses (HIV-1 and other lentiviruses). Key component of the cytokinesis checkpoint, a process required to delay abscission to prevent both premature resolution of intercellular chromosome bridges and accumulation of DNA damage: upon phosphorylation by AURKB, together with ZFYVE19/ANCHR, retains abscission-competent VPS4 (VPS4A and/or VPS4B) at the midbody ring until abscission checkpoint signaling is terminated at late cytokinesis. Deactivation of AURKB results in dephosphorylation of CHMP4C followed by its dissociation from ANCHR and VPS4 and subsequent abscission. ESCRT-III proteins are believed to mediate the necessary vesicle extrusion and/or membrane fission activities, possibly in conjunction with the AAA ATPase VPS4. Involved in HIV-1 p6- and p9-dependent virus release. CHMP4A/B/C are required for the exosomal release of SDCBP, CD63 and syndecan. In Homo sapiens (Human), this protein is Charged multivesicular body protein 4c (CHMP4C).